A 359-amino-acid chain; its full sequence is DNA replication and repair protein RecF (359 aa).

Residue 30 to 37 (GPNGSGKT) participates in ATP binding.

It belongs to the RecF family.

The protein resides in the cytoplasm. Its function is as follows. The RecF protein is involved in DNA metabolism; it is required for DNA replication and normal SOS inducibility. RecF binds preferentially to single-stranded, linear DNA. It also seems to bind ATP. This is DNA replication and repair protein RecF from Vibrio vulnificus (strain CMCP6).